Reading from the N-terminus, the 867-residue chain is Respiratory burst oxidase homolog protein B (867 aa).

The span at 1-13 (MEIENTRDSDSMR) shows a compositional bias: basic and acidic residues. Residues 1–20 (MEIENTRDSDSMRGSRVGFS) form a disordered region. The Cytoplasmic portion of the chain corresponds to 1 to 322 (MEIENTRDSD…DYFIEDNWKR (322 aa)). 2 positions are modified to phosphoserine; by CPK: serine 82 and serine 97. EF-hand-like regions lie at residues 141 to 149 (AVNGMLTKS) and 175 to 186 (RCITSPAVTKDE). EF-hand domains are found at residues 198 to 233 (SFDA…SASA) and 242 to 277 (NSDE…APSH). Positions 211, 213, 215, 217, and 222 each coordinate Ca(2+). The chain crosses the membrane as a helical span at residues 323 to 343 (IWVMALWLSICAGLFTWKFIQ). Over 344–358 (YKRRAVFDVMGYCVS) the chain is Extracellular. A helical transmembrane segment spans residues 359–379 (VAKGGAETTKFNMALVLLPVC). The region spanning 361 to 519 (KGGAETTKFN…LFVIVYVLFI (159 aa)) is the Ferric oxidoreductase domain. At 380–407 (RNTITWLRSRTKLGKIIPFDDNINFHKV) the chain is on the cytoplasmic side. Residues 408-428 (IAFGIAVGVGLHAISHLTCDF) form a helical membrane-spanning segment. The Extracellular segment spans residues 429-463 (PRLLHATDEEYEPMKPFFGDERPNNYWWFVKGTEG). Residues 464 to 484 (WTGVVMVVLMIIAYVLAQPWF) traverse the membrane as a helical segment. Topologically, residues 485 to 506 (RRNRLNLPSTIKKLTGFNAFWY) are cytoplasmic. A helical transmembrane segment spans residues 507-527 (SHHLFVIVYVLFIIHGYFLYL). At 528 to 686 (SKKWYKKTTW…APAQDYKKYD (159 aa)) the chain is on the extracellular side. Residues 558–681 (SGYKAVKILK…DGPYGAPAQD (124 aa)) enclose the FAD-binding FR-type domain. The chain crosses the membrane as a helical span at residues 687 to 707 (VVLLVGLGIGATPLISIVKDV). At 708–867 (LNNIKQQKNI…TKFEFHKENF (160 aa)) the chain is on the cytoplasmic side.

It belongs to the RBOH (TC 5.B.1.3) family. Monomer and homodimer. In terms of processing, phosphorylation at Ser-82 and Ser-97 is required for full activity of RBOHB. Not phosphorylated at Ser-89. Phosphorylation at Ser-82 is induced by fungal elicitor treatment.

It is found in the cell membrane. Inhibited by diphenylene iodinium (DPI). In terms of biological role, calcium-dependent NADPH oxidase that generates superoxide. Involved in the massive phase II oxidative burst induced by pathogen infection. This Solanum tuberosum (Potato) protein is Respiratory burst oxidase homolog protein B (RBOHB).